The primary structure comprises 90 residues: UPF0297 protein OEOE_1166 (90 aa).

It belongs to the UPF0297 family.

The sequence is that of UPF0297 protein OEOE_1166 from Oenococcus oeni (strain ATCC BAA-331 / PSU-1).